A 122-amino-acid chain; its full sequence is Movement protein TGB2 (122 aa).

Over 1–12 (MVKSTVPTRPNK) the chain is Cytoplasmic. The chain crosses the membrane as a helical span at residues 13–33 (YWPGVVAIGLVSLFIFLSVSN). The Lumenal segment spans residues 34–76 (QKHSTTSGDNIHKFSNGGTYRDGSKCITYNRNSPLAYNGSSSN). A helical membrane pass occupies residues 77 to 97 (NTLFWLCLLGLSMVWIAYCGY). Over 98–122 (KSLSGQWHSCQHDKNERNFLFECFE) the chain is Cytoplasmic.

Belongs to the virgaviridae/benyvirus TGB2 movement protein family. Interacts with movement protein TGB3. TGB1-TGB3-TGB2 complex formation is enhanced by ATP hydrolysis.

It is found in the host cell junction. The protein localises to the host plasmodesma. Its subcellular location is the host endoplasmic reticulum membrane. It localises to the host cytoplasm. The protein resides in the host cytoskeleton. In terms of biological role, participates in the transport of viral genome to neighboring plant cells directly through plasmodesmata, without any budding. TGBp2 and TGBp3 are necessary for intracellular delivery of TGBp1-containing vRNPs to plasmodesmata. Can gate plasmodesmata and increase their size exclusion limit. To a lesser extent than TGB3, induces host actin cytoskeleton network thickening, which probably plays a major role in virus cell-to-cell movement. The protein is Movement protein TGB2 of Peanut clump virus (isolate 87/TGTA2) (PCV).